Reading from the N-terminus, the 156-residue chain is ATP synthase subunit b (156 aa).

Residues 7 to 29 (LLGQAISFGMFVWFCMKYVWPPI) form a helical membrane-spanning segment.

Belongs to the ATPase B chain family. As to quaternary structure, F-type ATPases have 2 components, F(1) - the catalytic core - and F(0) - the membrane proton channel. F(1) has five subunits: alpha(3), beta(3), gamma(1), delta(1), epsilon(1). F(0) has three main subunits: a(1), b(2) and c(10-14). The alpha and beta chains form an alternating ring which encloses part of the gamma chain. F(1) is attached to F(0) by a central stalk formed by the gamma and epsilon chains, while a peripheral stalk is formed by the delta and b chains.

The protein resides in the cell inner membrane. Its function is as follows. F(1)F(0) ATP synthase produces ATP from ADP in the presence of a proton or sodium gradient. F-type ATPases consist of two structural domains, F(1) containing the extramembraneous catalytic core and F(0) containing the membrane proton channel, linked together by a central stalk and a peripheral stalk. During catalysis, ATP synthesis in the catalytic domain of F(1) is coupled via a rotary mechanism of the central stalk subunits to proton translocation. Functionally, component of the F(0) channel, it forms part of the peripheral stalk, linking F(1) to F(0). The chain is ATP synthase subunit b from Vibrio cholerae serotype O1 (strain ATCC 39541 / Classical Ogawa 395 / O395).